The primary structure comprises 364 residues: Paraneoplastic antigen Ma2 homolog (364 aa).

The residue at position 2 (Ala2) is an N-acetylalanine. The segment covering 335–351 (EEEEATFENENTEEPEG) has biased composition (acidic residues). The disordered stretch occupies residues 335–364 (EEEEATFENENTEEPEGGDGYGHWGNEAND).

Belongs to the PNMA family.

It is found in the nucleus. Its subcellular location is the nucleolus. In Bos taurus (Bovine), this protein is Paraneoplastic antigen Ma2 homolog (PNMA2).